Reading from the N-terminus, the 126-residue chain is Larval cuticle protein 2 (126 aa).

The first 16 residues, 1-16, serve as a signal peptide directing secretion; that stretch reads MFKFVMILAVVGVATA. A Chitin-binding type R&amp;R domain is found at 39 to 100; the sequence is ADGFDSSLHT…PSGAWIPTPP (62 aa).

In terms of biological role, component of the larval cuticle. The sequence is that of Larval cuticle protein 2 (Lcp2) from Drosophila melanogaster (Fruit fly).